Consider the following 262-residue polypeptide: F-actin-capping protein subunit alpha (262 aa).

The protein belongs to the F-actin-capping protein alpha subunit family. As to quaternary structure, heterodimer of an alpha and a beta subunit.

The protein localises to the cytoplasm. The protein resides in the cytoskeleton. In terms of biological role, F-actin-capping proteins bind in a Ca(2+)-independent manner to the fast growing ends of actin filaments (barbed end) thereby blocking the exchange of subunits at these ends. Unlike other capping proteins (such as gelsolin and severin), these proteins do not sever actin filaments. The polypeptide is F-actin-capping protein subunit alpha (CAP1) (Yarrowia lipolytica (strain CLIB 122 / E 150) (Yeast)).